Consider the following 361-residue polypeptide: Probable cysteine protease RD19B (361 aa).

Positions 1-24 (MDYHLRVLFSVSLIFVFVSVSVCG) are cleaved as a signal peptide. A propeptide spans 25–131 (DEDVLIRQVV…NQAPILPTQN (107 aa)) (activation peptide). 2 cysteine pairs are disulfide-bonded: cysteine 153–cysteine 203 and cysteine 187–cysteine 237. Residue cysteine 156 is part of the active site. Residue asparagine 250 is glycosylated (N-linked (GlcNAc...) asparagine). A disulfide bridge links cysteine 293 with cysteine 347. Residues histidine 299 and asparagine 326 contribute to the active site.

The protein belongs to the peptidase C1 family.

The protein localises to the lytic vacuole. Its function is as follows. Probable thiol protease. The polypeptide is Probable cysteine protease RD19B (Arabidopsis thaliana (Mouse-ear cress)).